Reading from the N-terminus, the 180-residue chain is 3-hydroxyanthranilate 3,4-dioxygenase (180 aa).

Arg-44 contacts O2. The Fe cation site is built by His-48, Glu-54, and His-92. Residue Glu-54 coordinates substrate. Substrate contacts are provided by Arg-96 and Glu-106. The a divalent metal cation site is built by Cys-121, Cys-124, Cys-158, and Cys-161.

Belongs to the 3-HAO family. It depends on Fe(2+) as a cofactor.

The protein resides in the cytoplasm. The enzyme catalyses 3-hydroxyanthranilate + O2 = (2Z,4Z)-2-amino-3-carboxymuconate 6-semialdehyde. It functions in the pathway cofactor biosynthesis; NAD(+) biosynthesis; quinolinate from L-kynurenine: step 3/3. Functionally, catalyzes the oxidative ring opening of 3-hydroxyanthranilate to 2-amino-3-carboxymuconate semialdehyde, which spontaneously cyclizes to quinolinate. The chain is 3-hydroxyanthranilate 3,4-dioxygenase (bna1) from Neurospora crassa (strain ATCC 24698 / 74-OR23-1A / CBS 708.71 / DSM 1257 / FGSC 987).